A 51-amino-acid polypeptide reads, in one-letter code: uncharacterized protein (51 aa).

The interval 1 to 28 is disordered; that stretch reads MQQPQNITTSSISNNNNNNTSLTLQQQQ. Residues 13 to 47 adopt a coiled-coil conformation; that stretch reads SNNNNNNTSLTLQQQQEQLQQLQIKRKRNLMKQLQ.

This is an uncharacterized protein from Dictyostelium discoideum (Social amoeba).